The chain runs to 135 residues: Actin-related protein 2/3 complex subunit 5B (135 aa).

Belongs to the ARPC5 family. Component of the Arp2/3 complex composed of ARP2, ARP3, ARPC1/p41-ARC, ARPC2/p34-ARC, ARPC3/p21-ARC, ARPC4/p20-ARC and ARPC5/p16-ARC.

The protein localises to the cytoplasm. The protein resides in the cytoskeleton. It localises to the cell projection. Its function is as follows. Functions as a component of the Arp2/3 complex which is involved in regulation of actin polymerization and together with an activating nucleation-promoting factor (NPF) mediates the formation of branched actin networks. Arp2/3 complex plays a critical role in the control of cell morphogenesis via the modulation of cell polarity development. The sequence is that of Actin-related protein 2/3 complex subunit 5B (ARPC5B) from Arabidopsis thaliana (Mouse-ear cress).